Consider the following 557-residue polypeptide: T-complex protein 1 subunit theta-like 2 (557 aa).

Disordered regions lie at residues 1 to 33 (MDST…EPHL) and 531 to 557 (EIWN…GLNN).

Belongs to the TCP-1 chaperonin family.

Its subcellular location is the cytoplasm. In terms of biological role, possible molecular chaperone; assists the folding of proteins upon ATP hydrolysis. This Homo sapiens (Human) protein is T-complex protein 1 subunit theta-like 2 (CCT8L2).